The chain runs to 331 residues: Nucleotide sugar transporter SLC35B4 (331 aa).

11 helical membrane-spanning segments follow: residues 4-24 (ALAV…LELL), 30-50 (GCGN…GFLF), 59-79 (PAIP…VSVV), 92-112 (LHMI…IIIL), 117-137 (SIFK…CTFM), 153-173 (GFQA…ALLM), 201-221 (ALPL…AVLF), 229-249 (IPVI…NIIT), 251-267 (YVCI…CASL), 268-288 (TVTL…ILYF), and 291-311 (PFTL…LMYT). Residues 326-331 (KDSKKN) carry the Mediates endoplasmic reticulum retention motif.

This sequence belongs to the nucleotide-sugar transporter family. SLC35B subfamily.

The protein resides in the endoplasmic reticulum membrane. The enzyme catalyses UDP-N-acetyl-alpha-D-glucosamine(in) + UDP-alpha-D-glucuronate(out) = UDP-N-acetyl-alpha-D-glucosamine(out) + UDP-alpha-D-glucuronate(in). The catalysed reaction is UDP-alpha-D-xylose(in) + UDP-alpha-D-glucuronate(out) = UDP-alpha-D-xylose(out) + UDP-alpha-D-glucuronate(in). Its function is as follows. Antiporter that transports nucleotide sugars across the endoplasmic reticulum (ER) membrane in exchange for another nucleotide sugar. May couple UDP-alpha-D-glucuronate (UDP-GlcA) or UDP-alpha-D-xylose (UDP-Xyl) efflux to UDP-alpha-D-glucuronate (UDP-GlcA) influx into the ER lumen, which in turn stimulates glucuronidation and excretion of endobiotics and xenobiotics. Functionally, has UDP-GlcA:UDP-GlcNAc antiporter activity. The polypeptide is Nucleotide sugar transporter SLC35B4 (SLC35B4) (Homo sapiens (Human)).